The primary structure comprises 467 residues: Dynactin subunit 4 (467 aa).

An N-acetylalanine modification is found at A2. A coiled-coil region spans residues 152 to 172 (QQLAQKEKVERDRKKLARRRN). Phosphoserine is present on S203. Residue K222 forms a Glycyl lysine isopeptide (Lys-Gly) (interchain with G-Cter in SUMO2) linkage. T414 bears the Phosphothreonine mark.

This sequence belongs to the dynactin subunit 4 family. In terms of assembly, subunit of dynactin, a multiprotein complex part of a tripartite complex with dynein and a adapter, such as BICDL1, BICD2 or HOOK3. The dynactin complex is built around ACTR1A/ACTB filament and consists of an actin-related filament composed of a shoulder domain, a pointed end and a barbed end. Its length is defined by its flexible shoulder domain. The soulder is composed of 2 DCTN1 subunits, 4 DCTN2 and 2 DCTN3. The 4 DCNT2 (via N-terminus) bind the ACTR1A filament and act as molecular rulers to determine the length. The pointed end is important for binding dynein-dynactin cargo adapters. Consists of 4 subunits: ACTR10, DCNT4, DCTN5 and DCTN6. The barbed end is composed of a CAPZA1:CAPZB heterodimers, which binds ACTR1A/ACTB filament and dynactin and stabilizes dynactin. Interacts with ATP7B, but not ATP7A, in a copper-dependent manner. Interacts with ANK2; this interaction is required for localization at costameres. Interacts with N4BP2L1.

It is found in the cytoplasm. The protein resides in the cytoskeleton. Its subcellular location is the microtubule organizing center. The protein localises to the centrosome. It localises to the stress fiber. It is found in the cell cortex. The protein resides in the myofibril. Its subcellular location is the sarcomere. Functionally, part of the dynactin complex that activates the molecular motor dynein for ultra-processive transport along microtubules. This chain is Dynactin subunit 4 (Dctn4), found in Mus musculus (Mouse).